The primary structure comprises 169 residues: Inorganic pyrophosphatase (169 aa).

Substrate-binding residues include Lys26, Arg40, and Tyr52. Mg(2+) is bound by residues Asp62, Asp67, and Asp99. Tyr138 is a substrate binding site.

The protein belongs to the PPase family. As to quaternary structure, homohexamer. Mg(2+) is required as a cofactor.

The protein localises to the cytoplasm. The catalysed reaction is diphosphate + H2O = 2 phosphate + H(+). Catalyzes the hydrolysis of inorganic pyrophosphate (PPi) forming two phosphate ions. This chain is Inorganic pyrophosphatase, found in Thermoplasma volcanium (strain ATCC 51530 / DSM 4299 / JCM 9571 / NBRC 15438 / GSS1).